A 28-amino-acid polypeptide reads, in one-letter code: Grammistin Gs A (28 aa).

This sequence belongs to the grammistin family. Group 3 subfamily. As to quaternary structure, exists as aggregates of 3-4 molecules. In terms of tissue distribution, expressed by the skin glands.

Its subcellular location is the secreted. Its function is as follows. Thanks to its amphiphilic alpha-helice(s), it may integrate into membrane phospholipids, leading to lysis of the membrane. Has no substantial hemolytic activity. Has antibacterial activity with a broad spectrum against various species of bacteria including both Gram-positive and Gram-negative groups. This is Grammistin Gs A from Grammistes sexlineatus (Goldenstriped soapfish).